A 375-amino-acid chain; its full sequence is Platelet-derived growth factor receptor-like protein (375 aa).

A signal peptide spans 1–21 (MKVWLLLGLLLVHEALEDVTG). The tract at residues 22–64 (QHLPKNKRPKEPGENRIKPTNKKVKPKIPKIKDRDSADSTPKT) is disordered. Over residues 40–50 (PTNKKVKPKIP) the composition is skewed to basic residues. The 98-residue stretch at 62–159 (PKTQSIMMQV…GYICRKDETK (98 aa)) folds into the Ig-like C2-type 1 domain. A disulfide bond links C96 and C143. 2 N-linked (GlcNAc...) asparagine glycosylation sites follow: N132 and N219. Residues 272-375 (PSTTILASSN…TTVATTVEFS (104 aa)) form the Ig-like C2-type 2 domain. A disulfide bridge connects residues C293 and C357.

Forms a complex composed of PDGFRL, TNK2 and GRB2.

It localises to the secreted. The chain is Platelet-derived growth factor receptor-like protein (PDGFRL) from Macaca fascicularis (Crab-eating macaque).